The sequence spans 253 residues: 5-oxoprolinase subunit A (253 aa).

Belongs to the LamB/PxpA family. Forms a complex composed of PxpA, PxpB and PxpC.

The catalysed reaction is 5-oxo-L-proline + ATP + 2 H2O = L-glutamate + ADP + phosphate + H(+). Functionally, catalyzes the cleavage of 5-oxoproline to form L-glutamate coupled to the hydrolysis of ATP to ADP and inorganic phosphate. The sequence is that of 5-oxoprolinase subunit A from Bacillus anthracis (strain A0248).